A 509-amino-acid chain; its full sequence is Maturase K (509 aa).

This sequence belongs to the intron maturase 2 family. MatK subfamily.

The protein resides in the plastid. The protein localises to the chloroplast. Functionally, usually encoded in the trnK tRNA gene intron. Probably assists in splicing its own and other chloroplast group II introns. This Dalea purpurea (Violet prairie clover) protein is Maturase K.